The sequence spans 323 residues: Ficolin-2 (323 aa).

An N-terminal signal peptide occupies residues 1–26 (MDTRGVAAAMRPLVLLVAFLCTAAPA). Residues 52–102 (GLPGAAGPKGEAGASGPKGGQGPPGAPGEPGPPGPKGDRGEKGEPGPKGES) enclose the Collagen-like domain. Positions 55–66 (GAAGPKGEAGAS) are enriched in low complexity. The tract at residues 55-107 (GAAGPKGEAGASGPKGGQGPPGAPGEPGPPGPKGDRGEKGEPGPKGESWETEQ) is disordered. A compositionally biased stretch (pro residues) spans 75 to 86 (PGAPGEPGPPGP). The span at 87 to 102 (KGDRGEKGEPGPKGES) shows a compositional bias: basic and acidic residues. The 218-residue stretch at 106-323 (EQCLTGPRTC…KVSEMKFRAT (218 aa)) folds into the Fibrinogen C-terminal domain. 2 cysteine pairs are disulfide-bonded: C108–C136 and C115–C143. A glycan (N-linked (GlcNAc...) asparagine) is linked at N249. Residues D259, D261, and S265 each contribute to the Ca(2+) site. The cysteines at positions 267 and 280 are disulfide-linked. N-linked (GlcNAc...) asparagine glycans are attached at residues N302 and N310.

This sequence belongs to the ficolin lectin family. Homotrimer. Interacts with elastin. Interacts with MASP1 and MASP2. In terms of tissue distribution, mainly expressed in skeletal muscle.

Its subcellular location is the secreted. In terms of biological role, may function in innate immunity through activation of the lectin complement pathway. Calcium-dependent and GlcNAc-binding lectin. The protein is Ficolin-2 (FCN2) of Sus scrofa (Pig).